The primary structure comprises 251 residues: Putative mediator of RNA polymerase II transcription subunit 18 (251 aa).

It belongs to the Mediator complex subunit 18 family. As to quaternary structure, component of the Mediator complex.

It is found in the nucleus. In terms of biological role, component of the Mediator complex, a coactivator involved in the regulated transcription of nearly all RNA polymerase II-dependent genes. Mediator functions as a bridge to convey information from gene-specific regulatory proteins to the basal RNA polymerase II transcription machinery. Mediator is recruited to promoters by direct interactions with regulatory proteins and serves as a scaffold for the assembly of a functional preinitiation complex with RNA polymerase II and the general transcription factors. The polypeptide is Putative mediator of RNA polymerase II transcription subunit 18 (med18) (Dictyostelium discoideum (Social amoeba)).